Reading from the N-terminus, the 352-residue chain is Iron-sulfur cluster carrier protein (352 aa).

114–121 (GKGGVGKS) lines the ATP pocket.

The protein belongs to the Mrp/NBP35 ATP-binding proteins family. Homodimer. Interacts with BrxC.

Its function is as follows. Binds and transfers iron-sulfur (Fe-S) clusters to target apoproteins. Can hydrolyze ATP. Functionally, negatively regulates the expression of hpr/scoC. The effect on hpr/scoC may be indirect. In Bacillus subtilis (strain 168), this protein is Iron-sulfur cluster carrier protein (salA).